The chain runs to 680 residues: Dihydroxyacetone phosphate acyltransferase (680 aa).

Phosphoserine is present on residues Ser-12 and Ser-17. Positions 162 to 167 (HRSYID) match the HXXXXD motif motif. An N6-acetyllysine modification is found at Lys-643. The short motif at 678 to 680 (AKL) is the Microbody targeting signal element.

It belongs to the GPAT/DAPAT family. Part of a heterotrimeric complex composed of GNPAT, AGPS and a modified form of GNPAT.

The protein localises to the peroxisome membrane. It carries out the reaction dihydroxyacetone phosphate + an acyl-CoA = a 1-acylglycerone 3-phosphate + CoA. The enzyme catalyses dihydroxyacetone phosphate + hexadecanoyl-CoA = 1-hexadecanoylglycerone 3-phosphate + CoA. Its pathway is membrane lipid metabolism; glycerophospholipid metabolism. In terms of biological role, dihydroxyacetonephosphate acyltransferase catalyzing the first step in the biosynthesis of plasmalogens, a subset of phospholipids that differ from other glycerolipids by having an alkyl chain attached through a vinyl ether linkage at the sn-1 position of the glycerol backbone, and which unique physical properties have an impact on various aspects of cell signaling and membrane biology. The polypeptide is Dihydroxyacetone phosphate acyltransferase (Homo sapiens (Human)).